Here is a 405-residue protein sequence, read N- to C-terminus: Cellobiose 2-epimerase (405 aa).

It belongs to the cellobiose 2-epimerase family.

The catalysed reaction is D-cellobiose = beta-D-glucosyl-(1-&gt;4)-D-mannopyranose. In terms of biological role, catalyzes the reversible epimerization of cellobiose to 4-O-beta-D-glucopyranosyl-D-mannose (Glc-Man). Can also epimerize lactose to epilactose. The polypeptide is Cellobiose 2-epimerase (ce13) (Eubacterium cellulosolvens).